Consider the following 589-residue polypeptide: Phosphoenolpyruvate carboxykinase [GTP] (589 aa).

Residues Arg75 and 207-209 (YGG) contribute to the substrate site. Mn(2+) is bound by residues Lys216 and His236. Ser258 lines the substrate pocket. 259-264 (ASGKTN) is a GTP binding site. Ser260 is a catalytic residue. Asp287 provides a ligand contact to Mn(2+). Residue 374–376 (NSR) coordinates substrate. Residues Arg376, Arg407, and 500 to 503 (FAEN) each bind GTP.

This sequence belongs to the phosphoenolpyruvate carboxykinase [GTP] family. It depends on Mn(2+) as a cofactor.

It is found in the cytoplasm. It carries out the reaction oxaloacetate + GTP = phosphoenolpyruvate + GDP + CO2. Its pathway is carbohydrate biosynthesis; gluconeogenesis. In terms of biological role, catalyzes the conversion of oxaloacetate (OAA) to phosphoenolpyruvate (PEP), the rate-limiting step in the metabolic pathway that produces glucose from lactate and other precursors derived from the citric acid cycle. The sequence is that of Phosphoenolpyruvate carboxykinase [GTP] from Thermoplasma volcanium (strain ATCC 51530 / DSM 4299 / JCM 9571 / NBRC 15438 / GSS1).